A 134-amino-acid chain; its full sequence is Transcription antitermination protein NusB (134 aa).

It belongs to the NusB family.

Functionally, involved in transcription antitermination. Required for transcription of ribosomal RNA (rRNA) genes. Binds specifically to the boxA antiterminator sequence of the ribosomal RNA (rrn) operons. The polypeptide is Transcription antitermination protein NusB (Shewanella sp. (strain MR-4)).